Here is a 534-residue protein sequence, read N- to C-terminus: Origin of replication complex subunit 5 (534 aa).

The segment at 1-36 (MPPKEESSKVTRRSTRSSASVTVENSEPIESHTPTI) is disordered. 83 to 90 (GGASTGKT) serves as a coordination point for ATP. The short motif at 129-136 (HRKCSLNG) is the Nuclear localization signal element. The interval 397-428 (MFDSTGGMDNRKRKRKASEKSMEKKEIAEQEA) is disordered. Over residues 414-424 (SEKSMEKKEIA) the composition is skewed to basic and acidic residues.

This sequence belongs to the ORC5 family. As to quaternary structure, component of the origin recognition complex (ORC) composed of at least ORC1 (ORC1A or ORC1B), ORC2, ORC3, ORC4, ORC5 and ORC6. ORC is regulated in a cell-cycle and development dependent manner. It is sequentially assembled at the exit from anaphase of mitosis and disassembled as cells enter S phase. Interacts directly with ORC1A, ORC1B, ORC2, ORC3, ORC4 and ORC6. As to expression, follow a cell-cycle regulation with a peak at the G1/S-phase. Mostly expressed in flower buds and cauline leaves, and, to a lower exent, in roots, leaves and stems. Expressed at low levels ubiquitously.

The protein localises to the nucleus. Its function is as follows. Component of the origin recognition complex (ORC) that binds origins of replication. DNA-binding is ATP-dependent. The specific DNA sequences that define origins of replication have not been identified yet. ORC is required to assemble the pre-replication complex necessary to initiate DNA replication. The polypeptide is Origin of replication complex subunit 5 (Arabidopsis thaliana (Mouse-ear cress)).